The following is a 216-amino-acid chain: ATP-dependent Clp protease proteolytic subunit (216 aa).

The active-site Nucleophile is the Ser-101. The active site involves His-126.

This sequence belongs to the peptidase S14 family. In terms of assembly, component of the chloroplastic Clp protease core complex.

It localises to the plastid. Its subcellular location is the chloroplast stroma. The catalysed reaction is Hydrolysis of proteins to small peptides in the presence of ATP and magnesium. alpha-casein is the usual test substrate. In the absence of ATP, only oligopeptides shorter than five residues are hydrolyzed (such as succinyl-Leu-Tyr-|-NHMec, and Leu-Tyr-Leu-|-Tyr-Trp, in which cleavage of the -Tyr-|-Leu- and -Tyr-|-Trp bonds also occurs).. Its function is as follows. Cleaves peptides in various proteins in a process that requires ATP hydrolysis. Has a chymotrypsin-like activity. Plays a major role in the degradation of misfolded proteins. This is ATP-dependent Clp protease proteolytic subunit from Hordeum vulgare (Barley).